The primary structure comprises 1190 residues: Pyruvate-flavodoxin oxidoreductase (1190 aa).

2 4Fe-4S ferredoxin-type domains span residues 687–716 (EIPV…SKVY) and 743–773 (FTIQ…PRKK). Positions 696, 699, 702, 706, 752, 755, 758, 762, 826, 829, 854, and 1089 each coordinate [4Fe-4S] cluster.

The protein belongs to the pyruvate:ferredoxin/flavodoxin oxidoreductase family. The cofactor is [4Fe-4S] cluster.

The enzyme catalyses oxidized [flavodoxin] + pyruvate + CoA + 2 H(+) = reduced [flavodoxin] + acetyl-CoA + CO2. Its function is as follows. Oxidoreductase required for the transfer of electrons from pyruvate to flavodoxin, which reduces nitrogenase. In Trichormus variabilis (strain ATCC 29413 / PCC 7937) (Anabaena variabilis), this protein is Pyruvate-flavodoxin oxidoreductase (nifJ).